The primary structure comprises 240 residues: Lipoprotein signal peptidase (240 aa).

4 helical membrane-spanning segments follow: residues 38 to 58, 73 to 93, 98 to 118, and 120 to 140; these read LIWK…TSFL, LIPG…FGTL, PSLV…VLLF, and SNYL…SNII. Catalysis depends on residues aspartate 162 and aspartate 179. The chain crosses the membrane as a helical span at residues 177–197; it reads FPDTFVIIGMIFVGIQIIISF.

The protein belongs to the peptidase A8 family.

It localises to the cell membrane. It catalyses the reaction Release of signal peptides from bacterial membrane prolipoproteins. Hydrolyzes -Xaa-Yaa-Zaa-|-(S,diacylglyceryl)Cys-, in which Xaa is hydrophobic (preferably Leu), and Yaa (Ala or Ser) and Zaa (Gly or Ala) have small, neutral side chains.. It functions in the pathway protein modification; lipoprotein biosynthesis (signal peptide cleavage). This protein specifically catalyzes the removal of signal peptides from prolipoproteins. This chain is Lipoprotein signal peptidase, found in Malacoplasma penetrans (strain HF-2) (Mycoplasma penetrans).